Reading from the N-terminus, the 184-residue chain is uncharacterized protein (184 aa).

Residues 35 to 55 (LSFLIYILYTFSISGLSTFVI) traverse the membrane as a helical segment.

It is found in the membrane. This is an uncharacterized protein from Schizosaccharomyces pombe (strain 972 / ATCC 24843) (Fission yeast).